The sequence spans 393 residues: Pyridoxamine--pyruvate transaminase (393 aa).

3 residues coordinate pyridoxal 5'-phosphate: E68, Y95, and T146. At K197 the chain carries N6-(pyridoxal phosphate)lysine. R345 is a pyridoxal 5'-phosphate binding site.

It belongs to the class-V pyridoxal-phosphate-dependent aminotransferase family. As to quaternary structure, homotetramer. Requires pyridoxal 5'-phosphate as cofactor.

It catalyses the reaction pyridoxamine + pyruvate = pyridoxal + L-alanine. Functionally, catalyzes a reversible transamination reaction between pyridoxamine and pyruvate to form pyridoxal and L-alanine. This Mesorhizobium japonicum (strain LMG 29417 / CECT 9101 / MAFF 303099) (Mesorhizobium loti (strain MAFF 303099)) protein is Pyridoxamine--pyruvate transaminase (ppaT).